The chain runs to 892 residues: Smad protein daf-3 (892 aa).

2 disordered regions span residues M1–D43 and P135–K161. Residues I15 to T26 show a composition bias toward polar residues. Residues K198–V347 enclose the MH1 domain. The interval Y505–L552 is disordered. Positions S528 to Q540 are enriched in low complexity. The region spanning W657 to E880 is the MH2 domain.

Belongs to the dwarfin/SMAD family. As to quaternary structure, interacts with R-SMADs daf-8 and daf-14. Interacts with daf-14 in a daf-8 dependent manner. May interact with daf-5.

It is found in the cytoplasm. It localises to the nucleus. Its subcellular location is the chromosome. Functionally, transcriptional regulator and common SMAD (co-SMAD), required to regulate entry into a developmentally arrested larval state known as dauer, in response to harsh environmental conditions. Probable component of transcriptional regulatory complex with SMAD protein daf-5. Acts antagonistically to SMAD signaling downstream of TGF-beta-like daf-7 signaling. Binds to the 5'-GTCTG-3' motif found in regulatory regions and may modulate the expression of genes involved in TGF-beta-like daf-7 and Notch lag-2 signaling. May regulate gene expression outside the dauer pathway. This is Smad protein daf-3 from Caenorhabditis elegans.